The primary structure comprises 231 residues: MKIGIIGAMEQEVAILKDKIEGLSTITKAGCTFYTGTLNGADVVLLQSGIGKVAAAVGTTLLIAEHNVDVVLNTGSAGGFDSSLNLGDVVISTEVRHHDADVTAFGYEMGQMAQQPAAFIADEKLITTAEQALTEMSDKHAVRGLICTGDVFVCTPERQEFIRTHFPSVIAVEMEASAIAQTCHQFNTPFVVVRAISDVADKESPMSFDEFLPLAAQSSSEMVLNMVTLLK.

The Proton acceptor role is filled by Glu-12. Residues Gly-78, Val-153, and 174–175 (ME) contribute to the substrate site. Asp-198 functions as the Proton donor in the catalytic mechanism.

Belongs to the PNP/UDP phosphorylase family. MtnN subfamily.

It carries out the reaction S-adenosyl-L-homocysteine + H2O = S-(5-deoxy-D-ribos-5-yl)-L-homocysteine + adenine. The catalysed reaction is S-methyl-5'-thioadenosine + H2O = 5-(methylsulfanyl)-D-ribose + adenine. The enzyme catalyses 5'-deoxyadenosine + H2O = 5-deoxy-D-ribose + adenine. It participates in amino-acid biosynthesis; L-methionine biosynthesis via salvage pathway; S-methyl-5-thio-alpha-D-ribose 1-phosphate from S-methyl-5'-thioadenosine (hydrolase route): step 1/2. In terms of biological role, catalyzes the irreversible cleavage of the glycosidic bond in both 5'-methylthioadenosine (MTA) and S-adenosylhomocysteine (SAH/AdoHcy) to adenine and the corresponding thioribose, 5'-methylthioribose and S-ribosylhomocysteine, respectively. Also cleaves 5'-deoxyadenosine, a toxic by-product of radical S-adenosylmethionine (SAM) enzymes, into 5-deoxyribose and adenine. The polypeptide is 5'-methylthioadenosine/S-adenosylhomocysteine nucleosidase (Aliivibrio fischeri (Vibrio fischeri)).